Consider the following 292-residue polypeptide: D-alanyl-D-alanine endopeptidase (292 aa).

The first 18 residues, 1-18, serve as a signal peptide directing secretion; the sequence is MFKKALFILSLCPSFALA. Residue Ser45 is the Acyl-ester intermediate of the active site. Lys48 acts as the Proton acceptor in catalysis. Ser102 is an active-site residue. Residue Lys207 coordinates substrate.

This sequence belongs to the peptidase S11 family.

Its subcellular location is the periplasm. In terms of biological role, cell wall formation. May play a specialized role in remodeling the cell wall. Specifically hydrolyzes the DD-diaminopimelate-alanine bonds in high-molecular-mass murein sacculi. In Haemophilus influenzae (strain ATCC 51907 / DSM 11121 / KW20 / Rd), this protein is D-alanyl-D-alanine endopeptidase (pbpG).